A 723-amino-acid polypeptide reads, in one-letter code: Catalase-peroxidase (723 aa).

The segment at residues 96 to 225 (WHAAGSYRVA…LAAVMMGLIY (130 aa)) is a cross-link (tryptophyl-tyrosyl-methioninium (Trp-Tyr) (with M-251)). H97 acts as the Proton acceptor in catalysis. Positions 225–251 (YVNPEGVDGNPDPLKTAEDVRVTFARM) form a cross-link, tryptophyl-tyrosyl-methioninium (Tyr-Met) (with W-96). H266 is a heme b binding site.

Belongs to the peroxidase family. Peroxidase/catalase subfamily. Homodimer or homotetramer. Requires heme b as cofactor. Formation of the three residue Trp-Tyr-Met cross-link is important for the catalase, but not the peroxidase activity of the enzyme.

It carries out the reaction H2O2 + AH2 = A + 2 H2O. It catalyses the reaction 2 H2O2 = O2 + 2 H2O. Functionally, bifunctional enzyme with both catalase and broad-spectrum peroxidase activity. The sequence is that of Catalase-peroxidase from Alkalilimnicola ehrlichii (strain ATCC BAA-1101 / DSM 17681 / MLHE-1).